We begin with the raw amino-acid sequence, 251 residues long: E3 ubiquitin-protein ligase MARCHF3 (251 aa).

The segment at Q61 to E121 adopts an RING-CH-type zinc-finger fold. Positions 69, 72, 85, 87, 95, 98, 111, and 114 each coordinate Zn(2+). A run of 2 helical transmembrane segments spans residues L143–L163 and A180–V200.

It is found in the cytoplasmic vesicle membrane. The protein resides in the early endosome membrane. The catalysed reaction is S-ubiquitinyl-[E2 ubiquitin-conjugating enzyme]-L-cysteine + [acceptor protein]-L-lysine = [E2 ubiquitin-conjugating enzyme]-L-cysteine + N(6)-ubiquitinyl-[acceptor protein]-L-lysine.. It participates in protein modification; protein ubiquitination. E3 ubiquitin-protein ligase which may be involved in endosomal trafficking. E3 ubiquitin ligases accept ubiquitin from an E2 ubiquitin-conjugating enzyme in the form of a thioester and then directly transfer the ubiquitin to targeted substrates. The protein is E3 ubiquitin-protein ligase MARCHF3 (marchf3) of Xenopus tropicalis (Western clawed frog).